Reading from the N-terminus, the 381-residue chain is MLRFARSLYPLILSVTKSDPERGHQRLIQTLKKVDTMHRNGFAVAMEQLEQAFTHADPRLQQTCWGLNFPNVLGLSAGCDKEGEAAAVWPALGFGFAELGAVTKYAQPGNDRPRLFRLPQDQAVLNRLGANNEGAVAMAAKLKHTWDYYPRTIPIGINLCKSKITPLDQAVEDYVFSFQTLAPVADYFVVNVSSPNTPGLRSLQESDELPRIFAGLQSANHWQKPLLVKISPDLSWEAIAVIIDLVKEHNLSGIVATNTSTRRSGLKTKILPQTGQPIEQEAGGLSGQPIRDRATEVIRYIYQQTGGTIPIIGVGGIFTAEDAWEKIQAGASFLQIYTGWIYGGPWVVSDILQGLGEKLAAGGFSHISEAVGIDTIGKAPE.

FMN is bound by residues 77–81 and Ala-101; that span reads AGCDK. Lys-81 contributes to the substrate binding site. 126 to 129 contributes to the substrate binding site; sequence NRLG. FMN is bound by residues Asn-158 and Asn-191. Asn-191 contacts substrate. The active-site Nucleophile is the Ser-194. A substrate-binding site is contributed by Asn-196. Residues Lys-229 and Thr-257 each contribute to the FMN site. 258 to 259 contacts substrate; it reads NT. Residues Gly-287, Gly-316, and 337–338 contribute to the FMN site; that span reads YT.

It belongs to the dihydroorotate dehydrogenase family. Type 2 subfamily. As to quaternary structure, monomer. It depends on FMN as a cofactor.

It is found in the cell membrane. The enzyme catalyses (S)-dihydroorotate + a quinone = orotate + a quinol. The protein operates within pyrimidine metabolism; UMP biosynthesis via de novo pathway; orotate from (S)-dihydroorotate (quinone route): step 1/1. Its function is as follows. Catalyzes the conversion of dihydroorotate to orotate with quinone as electron acceptor. The chain is Dihydroorotate dehydrogenase (quinone) (pyrD) from Synechocystis sp. (strain ATCC 27184 / PCC 6803 / Kazusa).